We begin with the raw amino-acid sequence, 421 residues long: 4-hydroxy-3-methylbut-2-en-1-yl diphosphate synthase (flavodoxin) (421 aa).

[4Fe-4S] cluster-binding residues include Cys-298, Cys-301, Cys-344, and Glu-351.

Belongs to the IspG family. It depends on [4Fe-4S] cluster as a cofactor.

The enzyme catalyses (2E)-4-hydroxy-3-methylbut-2-enyl diphosphate + oxidized [flavodoxin] + H2O + 2 H(+) = 2-C-methyl-D-erythritol 2,4-cyclic diphosphate + reduced [flavodoxin]. It participates in isoprenoid biosynthesis; isopentenyl diphosphate biosynthesis via DXP pathway; isopentenyl diphosphate from 1-deoxy-D-xylulose 5-phosphate: step 5/6. Converts 2C-methyl-D-erythritol 2,4-cyclodiphosphate (ME-2,4cPP) into 1-hydroxy-2-methyl-2-(E)-butenyl 4-diphosphate. The sequence is that of 4-hydroxy-3-methylbut-2-en-1-yl diphosphate synthase (flavodoxin) from Neisseria meningitidis serogroup B (strain ATCC BAA-335 / MC58).